Here is a 465-residue protein sequence, read N- to C-terminus: Ribulose bisphosphate carboxylase large chain (465 aa).

Position 4 is an N6,N6,N6-trimethyllysine (lysine 4). Positions 113 and 163 each coordinate substrate. The active-site Proton acceptor is the lysine 165. Lysine 167 lines the substrate pocket. Mg(2+) contacts are provided by lysine 191, aspartate 193, and glutamate 194. Position 191 is an N6-carboxylysine (lysine 191). Residue histidine 284 is the Proton acceptor of the active site. 3 residues coordinate substrate: arginine 285, histidine 317, and serine 369.

It belongs to the RuBisCO large chain family. Type I subfamily. In terms of assembly, heterohexadecamer of 8 large chains and 8 small chains; disulfide-linked. The disulfide link is formed within the large subunit homodimers. Mg(2+) serves as cofactor. In terms of processing, the disulfide bond which can form in the large chain dimeric partners within the hexadecamer appears to be associated with oxidative stress and protein turnover.

The protein localises to the plastid. The protein resides in the chloroplast. The enzyme catalyses 2 (2R)-3-phosphoglycerate + 2 H(+) = D-ribulose 1,5-bisphosphate + CO2 + H2O. It carries out the reaction D-ribulose 1,5-bisphosphate + O2 = 2-phosphoglycolate + (2R)-3-phosphoglycerate + 2 H(+). In terms of biological role, ruBisCO catalyzes two reactions: the carboxylation of D-ribulose 1,5-bisphosphate, the primary event in carbon dioxide fixation, as well as the oxidative fragmentation of the pentose substrate in the photorespiration process. Both reactions occur simultaneously and in competition at the same active site. The protein is Ribulose bisphosphate carboxylase large chain of Ilex crenata (Japanese holly).